Here is a 71-residue protein sequence, read N- to C-terminus: Immune-induced peptide 18 (71 aa).

Residues 1–24 form the signal peptide; it reads MKLIALCCLLLLGLLGFLAAPGVA. Positions 25–26 are excised as a propeptide; it reads SP. Residues 26 to 71 are disordered; the sequence is PSRHTGPGNGSGSGAGSGNPFRSPSSQQRPLYYDAPIGKPSKTMYA. Gly residues predominate over residues 32–42; it reads PGNGSGSGAGS.

Hemolymph (at protein level).

The protein resides in the secreted. The protein is Immune-induced peptide 18 (IM18) of Drosophila melanogaster (Fruit fly).